A 143-amino-acid polypeptide reads, in one-letter code: MFLGSHAPRLDDKGRLTLPAKFRDELEGGLVITKGQERCLYVFPMAEFTRISESLRTVPVTAKALRDYSRVFFSSAADDVPDRQGRITVPAPLRSYAGLMRDCVVNGANTRIEIWDAQRWQAYLESQEESFAELSEEVLPGVI.

2 consecutive SpoVT-AbrB domains span residues 5–47 (SHAP…PMAE) and 76–119 (AADD…DAQR).

It belongs to the MraZ family. As to quaternary structure, forms oligomers.

The protein localises to the cytoplasm. Its subcellular location is the nucleoid. The polypeptide is Transcriptional regulator MraZ (Frankia casuarinae (strain DSM 45818 / CECT 9043 / HFP020203 / CcI3)).